Consider the following 412-residue polypeptide: Phosphate-repressible acid phosphatase (412 aa).

A signal peptide spans 1 to 19 (MLTKQTLLAFVGALALATG). N-linked (GlcNAc...) asparagine glycosylation is found at N74, N121, N186, and N208. Residue D215 is the Proton donor of the active site. N-linked (GlcNAc...) asparagine glycosylation is found at N217, N332, and N343.

The N-terminus is blocked.

The protein resides in the secreted. It catalyses the reaction a phosphate monoester + H2O = an alcohol + phosphate. The sequence is that of Phosphate-repressible acid phosphatase (PHOA) from Penicillium chrysogenum (Penicillium notatum).